Consider the following 418-residue polypeptide: Serine--tRNA ligase (418 aa).

231–233 (TAE) lines the L-serine pocket. Residue 262 to 264 (RSE) participates in ATP binding. Glutamate 285 contacts L-serine. Position 349–352 (349–352 (EISS)) interacts with ATP. Residue serine 385 participates in L-serine binding.

The protein belongs to the class-II aminoacyl-tRNA synthetase family. Type-1 seryl-tRNA synthetase subfamily. As to quaternary structure, homodimer. The tRNA molecule binds across the dimer.

Its subcellular location is the cytoplasm. It carries out the reaction tRNA(Ser) + L-serine + ATP = L-seryl-tRNA(Ser) + AMP + diphosphate + H(+). The catalysed reaction is tRNA(Sec) + L-serine + ATP = L-seryl-tRNA(Sec) + AMP + diphosphate + H(+). Its pathway is aminoacyl-tRNA biosynthesis; selenocysteinyl-tRNA(Sec) biosynthesis; L-seryl-tRNA(Sec) from L-serine and tRNA(Sec): step 1/1. In terms of biological role, catalyzes the attachment of serine to tRNA(Ser). Is also able to aminoacylate tRNA(Sec) with serine, to form the misacylated tRNA L-seryl-tRNA(Sec), which will be further converted into selenocysteinyl-tRNA(Sec). This Ureaplasma urealyticum serovar 10 (strain ATCC 33699 / Western) protein is Serine--tRNA ligase.